Reading from the N-terminus, the 378-residue chain is Erythronate-4-phosphate dehydrogenase (378 aa).

Substrate contacts are provided by serine 45 and threonine 66. 2 residues coordinate NAD(+): aspartate 146 and threonine 175. Arginine 208 is an active-site residue. Aspartate 232 lines the NAD(+) pocket. Glutamate 237 is a catalytic residue. Residue histidine 254 is the Proton donor of the active site. Residue glycine 257 participates in NAD(+) binding. Tyrosine 258 contributes to the substrate binding site.

It belongs to the D-isomer specific 2-hydroxyacid dehydrogenase family. PdxB subfamily. As to quaternary structure, homodimer.

The protein localises to the cytoplasm. It carries out the reaction 4-phospho-D-erythronate + NAD(+) = (R)-3-hydroxy-2-oxo-4-phosphooxybutanoate + NADH + H(+). It participates in cofactor biosynthesis; pyridoxine 5'-phosphate biosynthesis; pyridoxine 5'-phosphate from D-erythrose 4-phosphate: step 2/5. In terms of biological role, catalyzes the oxidation of erythronate-4-phosphate to 3-hydroxy-2-oxo-4-phosphonooxybutanoate. This chain is Erythronate-4-phosphate dehydrogenase, found in Escherichia coli O127:H6 (strain E2348/69 / EPEC).